A 188-amino-acid polypeptide reads, in one-letter code: dTTP/UTP pyrophosphatase (188 aa).

Catalysis depends on aspartate 70, which acts as the Proton acceptor.

The protein belongs to the Maf family. YhdE subfamily. A divalent metal cation is required as a cofactor.

The protein localises to the cytoplasm. It catalyses the reaction dTTP + H2O = dTMP + diphosphate + H(+). The catalysed reaction is UTP + H2O = UMP + diphosphate + H(+). In terms of biological role, nucleoside triphosphate pyrophosphatase that hydrolyzes dTTP and UTP. May have a dual role in cell division arrest and in preventing the incorporation of modified nucleotides into cellular nucleic acids. This Clostridium beijerinckii (strain ATCC 51743 / NCIMB 8052) (Clostridium acetobutylicum) protein is dTTP/UTP pyrophosphatase.